The primary structure comprises 236 residues: DNA repair protein RecO (236 aa).

Belongs to the RecO family.

Functionally, involved in DNA repair and RecF pathway recombination. The polypeptide is DNA repair protein RecO (Photobacterium profundum (strain SS9)).